A 220-amino-acid chain; its full sequence is Elongation factor Ts (220 aa).

The interval 83–86 is involved in Mg(2+) ion dislocation from EF-Tu; it reads TDFV.

It belongs to the EF-Ts family.

It localises to the cytoplasm. Associates with the EF-Tu.GDP complex and induces the exchange of GDP to GTP. It remains bound to the aminoacyl-tRNA.EF-Tu.GTP complex up to the GTP hydrolysis stage on the ribosome. The protein is Elongation factor Ts of Synechococcus sp. (strain CC9605).